We begin with the raw amino-acid sequence, 379 residues long: 2-nitroimidazole nitrohydrolase (379 aa).

Cys-357 functions as the Amidino-cysteine intermediate in the catalytic mechanism.

This sequence belongs to the arginine deiminase family.

It catalyses the reaction 2-nitroimidazole + H2O = 1,3-dihydro-2H-imidazol-2-one + nitrite + H(+). Functionally, involved in the biodegradation of 2-Nitroimidazole (2NI) which is a natural antibiotic and an analog of the synthetic nitroimidazoles used for treatment of tuberculosis, Chagas disease (also called American Trypanosomiasis) and cancer. Catalyzes the hydrolytic denitration of 2NI to produce imidazol-2-one and nitrite. It is also active against the 2NI synthetic derivative benznidazole. NnhA confers drug resistance to 2NI. This Mycobacterium sp. (strain JS330) protein is 2-nitroimidazole nitrohydrolase (nnhA).